A 66-amino-acid polypeptide reads, in one-letter code: ATP synthase F(0) complex subunit 8 (66 aa).

Residues 8–24 (TWLTMILSMFLVLFIIF) form a helical membrane-spanning segment. Lys-54 carries the post-translational modification N6-acetyllysine; alternate. An N6-succinyllysine; alternate modification is found at Lys-54. Lys-57 bears the N6-acetyllysine mark.

It belongs to the ATPase protein 8 family. In terms of assembly, component of the ATP synthase complex composed at least of ATP5F1A/subunit alpha, ATP5F1B/subunit beta, ATP5MC1/subunit c (homooctomer), MT-ATP6/subunit a, MT-ATP8/subunit 8, ATP5ME/subunit e, ATP5MF/subunit f, ATP5MG/subunit g, ATP5MK/subunit k, ATP5MJ/subunit j, ATP5F1C/subunit gamma, ATP5F1D/subunit delta, ATP5F1E/subunit epsilon, ATP5PF/subunit F6, ATP5PB/subunit b, ATP5PD/subunit d, ATP5PO/subunit OSCP. ATP synthase complex consists of a soluble F(1) head domain (subunits alpha(3) and beta(3)) - the catalytic core - and a membrane F(0) domain - the membrane proton channel (subunits c, a, 8, e, f, g, k and j). These two domains are linked by a central stalk (subunits gamma, delta, and epsilon) rotating inside the F1 region and a stationary peripheral stalk (subunits F6, b, d, and OSCP). Interacts with PRICKLE3.

It is found in the mitochondrion membrane. Functionally, subunit 8, of the mitochondrial membrane ATP synthase complex (F(1)F(0) ATP synthase or Complex V) that produces ATP from ADP in the presence of a proton gradient across the membrane which is generated by electron transport complexes of the respiratory chain. ATP synthase complex consist of a soluble F(1) head domain - the catalytic core - and a membrane F(1) domain - the membrane proton channel. These two domains are linked by a central stalk rotating inside the F(1) region and a stationary peripheral stalk. During catalysis, ATP synthesis in the catalytic domain of F(1) is coupled via a rotary mechanism of the central stalk subunits to proton translocation. In vivo, can only synthesize ATP although its ATP hydrolase activity can be activated artificially in vitro. Part of the complex F(0) domain. The protein is ATP synthase F(0) complex subunit 8 of Ovis aries (Sheep).